A 492-amino-acid chain; its full sequence is Alpha-2-antiplasmin (492 aa).

The signal sequence occupies residues 1-22 (MALLWGLLALILSCLSSLCSAQ). A propeptide spanning residues 23 to 40 (FSPVSTMEPLDLQLMDGQ) is cleaved from the precursor. A disordered region spans residues 56–76 (QEPGGQIAPKKAPEDCKLSPT). A disulfide bridge links C71 with C144. 5 N-linked (GlcNAc...) asparagine glycosylation sites follow: N127, N249, N296, N310, and N317. Positions 433–492 (SVRNPNPGAQPERKEQQDSPDGKDSFQDHKGLPRGDKPFDPDLKLGPPSEEDYAQPSSPK) are disordered. A compositionally biased stretch (basic and acidic residues) spans 443 to 475 (PERKEQQDSPDGKDSFQDHKGLPRGDKPFDPDL). Position 485 is a sulfotyrosine (Y485).

It belongs to the serpin family. In terms of assembly, forms protease inhibiting heterodimer with TMPRSS7. In terms of processing, proteolytically cleaved at Pro-31 by both the prolyl endopeptidase FAP form and antiplasmin-cleaving enzyme FAP soluble form to generate mature alpha-2-antiplasmin. As to expression, expressed by the liver and secreted in plasma.

It is found in the secreted. Its function is as follows. Serine protease inhibitor. The major targets of this inhibitor are plasmin and trypsin, but it also inactivates matriptase-3/TMPRSS7 and chymotrypsin. The polypeptide is Alpha-2-antiplasmin (SERPINF2) (Bos taurus (Bovine)).